A 514-amino-acid chain; its full sequence is Antiseptic resistance protein (514 aa).

The Cytoplasmic segment spans residues 1–23 (MISFFTKTTDMMTSKKRWTALVV). A helical membrane pass occupies residues 24-41 (LAVSLFVVTMDMTILIMA). At 42–57 (LPELVRELEPSGTQQL) the chain is on the extracellular side. The chain crosses the membrane as a helical span at residues 58–75 (WIVDIYSLVLAGFIIPLS). Topologically, residues 76–86 (AFADKWGRKKA) are cytoplasmic. The helical transmembrane segment at 87 to 104 (LLTGFALFGLVSLAIFFA) threads the bilayer. Residues 105–112 (ESAEFVIA) lie on the Extracellular side of the membrane. The helical transmembrane segment at 113 to 130 (IRFLLGIAGALIMPTTLS) threads the bilayer. The Cytoplasmic segment spans residues 131 to 146 (MIRVIFENPKERATAL). The chain crosses the membrane as a helical span at residues 147–164 (AVWSIASSIGAVFGPIIG). Residues 165–172 (GALLEQFS) lie on the Extracellular side of the membrane. The chain crosses the membrane as a helical span at residues 173 to 190 (WHSAFLINVPFAIIAVVA). At 191-207 (GLFLLPESKLSKEKSHS) the chain is on the cytoplasmic side. The helical transmembrane segment at 208–225 (WDIPSTILSIAGMIGLVW) threads the bilayer. Topologically, residues 226 to 237 (SIKEFSKEGLAD) are extracellular. A helical transmembrane segment spans residues 238 to 255 (IIPWVVIVLAITMIVIFV). At 256 to 278 (KRNLSSSDPMLDVRLFKKRSFSA) the chain is on the cytoplasmic side. The helical transmembrane segment at 279-295 (GTIAAFMTMFAMASVLL) threads the bilayer. Residues 296–315 (LASQWLQVVEELSPFKAGLY) are Extracellular-facing. The helical transmembrane segment at 316 to 333 (LLPMAIGDMVFAPIAPGL) threads the bilayer. Residues 334-341 (AARFGPKI) lie on the Cytoplasmic side of the membrane. Residues 342–360 (VLPSGIGIAAIGMFIMYFF) form a helical membrane-spanning segment. Topologically, residues 361–369 (GHPLSYSTM) are extracellular. Residues 370 to 387 (ALALILVGAGMASLAVAS) traverse the membrane as a helical segment. The Cytoplasmic segment spans residues 388–408 (ALIMLETPTSKAGNAAAVEES). A helical transmembrane segment spans residues 409-426 (MYDLGNVFGVAVLGSLSS). Residues 427–481 (MLYRVFLDISSFSSKGIVGDLAHVAEESVVGAVEVAKATGIKQLANEAVTSFNDA) lie on the Extracellular side of the membrane. A helical membrane pass occupies residues 482-499 (FVATALVGGIIMIIISIV). The Cytoplasmic segment spans residues 500–514 (VYLLIPKSLDITKQK).

This sequence belongs to the major facilitator superfamily.

The protein localises to the cell membrane. Confers export-mediated resistance against antiseptic and disinfectant compounds such as intercalating dyes, quaternary ammonium salts and diamidines. In Staphylococcus aureus (strain Mu50 / ATCC 700699), this protein is Antiseptic resistance protein (qacA).